Here is a 245-residue protein sequence, read N- to C-terminus: NAD(P)H-hydrate epimerase (245 aa).

The 201-residue stretch at 21 to 221 folds into the YjeF N-terminal domain; the sequence is MREIDRLAVQ…DLGIPPAVYT (201 aa). 72 to 76 is a (6S)-NADPHX binding site; the sequence is GNGGG. Residues Asn-73 and Asp-135 each coordinate K(+). Residues 139–145 and Asp-168 each bind (6S)-NADPHX; that span reads GYSLLGA. Ser-171 lines the K(+) pocket.

This sequence belongs to the NnrE/AIBP family. K(+) serves as cofactor.

The catalysed reaction is (6R)-NADHX = (6S)-NADHX. It catalyses the reaction (6R)-NADPHX = (6S)-NADPHX. Catalyzes the epimerization of the S- and R-forms of NAD(P)HX, a damaged form of NAD(P)H that is a result of enzymatic or heat-dependent hydration. This is a prerequisite for the S-specific NAD(P)H-hydrate dehydratase to allow the repair of both epimers of NAD(P)HX. This is NAD(P)H-hydrate epimerase from Dehalogenimonas lykanthroporepellens (strain ATCC BAA-1523 / JCM 15061 / BL-DC-9).